A 179-amino-acid polypeptide reads, in one-letter code: Large ribosomal subunit protein uL6 (179 aa).

It belongs to the universal ribosomal protein uL6 family. As to quaternary structure, part of the 50S ribosomal subunit.

Functionally, this protein binds to the 23S rRNA, and is important in its secondary structure. It is located near the subunit interface in the base of the L7/L12 stalk, and near the tRNA binding site of the peptidyltransferase center. In Saccharopolyspora erythraea (strain ATCC 11635 / DSM 40517 / JCM 4748 / NBRC 13426 / NCIMB 8594 / NRRL 2338), this protein is Large ribosomal subunit protein uL6.